Here is a 337-residue protein sequence, read N- to C-terminus: PHD finger protein 11 (337 aa).

The segment at 25–61 (KRTCALCPEGHEWSQIYFSPSGNIVAHENCLLYSSGL) adopts a C2HC pre-PHD-type zinc-finger fold. A PHD-type zinc finger spans residues 91-143 (LKCSFCNKGGATVGCDLWFCKKSYHYVCAKKDQAILQVDGNHGTYKLFCPEHS). Disordered regions lie at residues 145-196 (EQEE…HGHT) and 301-337 (GDLD…GDSL). Residues 187–196 (HMTEEPHGHT) show a composition bias toward basic and acidic residues. 2 stretches are compositionally biased toward polar residues: residues 301 to 312 (GDLDCSSSTSGS) and 323 to 337 (SQES…GDSL).

As to quaternary structure, interacts with BRCA1 and RELA.

The protein localises to the nucleus. Positive regulator of Th1-type cytokine gene expression. In Mus musculus (Mouse), this protein is PHD finger protein 11 (Phf11).